Consider the following 828-residue polypeptide: MMSASRLAGTLIPAMAFLSCVRPESWEPCVVPNITYQCMELNFYKIPDNLPFSTKNLDLSFNPLRHLGSYSFFSFPELQVLDLSRCEIQTIEDGAYQSLSHLSTLILTGNPIQNLALGAFSGLSSLQKLVAVETNLASLENFPIGHLKTLKELNVAHNLIQSFKLPEYFSNLTNLEHLDLSSNKIQSIYCKDLQVLHQMPLLNLSLDLSLNAMNFIQPGAFKEIRLHKLTLRNSFDSLNVMKTCIQGLAGLEVHHLVLGEFRNEKNLEKFDTSALEGLCNLTIEEFRLAYLDYYLDDIIDLFNCLANVSSFSLVSVTIKSVKDFSYNFGWQHLELVNCKFGQFPTLELKSLKRLTFTANKGGNAFSEVDLPSLEFLDLSRNGLSFKGCCSQSDFGTTSLKYLDLSFNDVITMGSNFLGLEQLEHLDFQHSNLKQMSEFSVFLSLRNLIYLDISHTHTRVAFNGIFNGLSSLKVLKMAGNSFQENFLPDIFTELRNLTFLDLSQCQLEQLSPTAFNSLSSLQVLNMSHNNFFSLDTFPYKCLNSLQVLDYSLNHIMTSKKQELQHFPSSLAFLNLTQNDFACTCEHQSFLQWIKDQRQLLVEVERMECATPSDKQGMPVLSLNITCQMNKTVIGVSVFSVLVVSVVAVLVYKFYFHLMLLAGCIKYGRGENTYDAFVIYSSQDEDWVRNELVKNLEEGVPTFQLCLHYRDFIPGVAIAANIIHEGFHKSRKVIVVVSQHFIQSRWCIFEYEIAQTWQFLSSRAGIIFIVLQKVEKTLLRQQVELYRLLSRNTYLEWEDSVLGRHIFWRRLRKALLDGKSWNPEGTVGTG.

A signal peptide spans 1 to 23; that stretch reads MMSASRLAGTLIPAMAFLSCVRP. The Extracellular portion of the chain corresponds to 24-629; the sequence is ESWEPCVVPN…SLNITCQMNK (606 aa). Cysteine 29 and cysteine 38 are joined by a disulfide. A glycan (N-linked (GlcNAc...) asparagine) is linked at asparagine 33. LRR repeat units follow at residues 53–74, 77–98, 101–122, 125–146, and 149–170; these read STKNLDLSFNPLRHLGSYSFFS, ELQVLDLSRCEIQTIEDGAYQS, HLSTLILTGNPIQNLALGAFSG, SLQKLVAVETNLASLENFPIGH, and TLKELNVAHNLIQSFKLPEYFS. Asparagine 171 carries an N-linked (GlcNAc...) asparagine glycan. 3 LRR repeats span residues 174-195, 203-223, and 225-245; these read NLEHLDLSSNKIQSIYCKDLQV, NLSLDLSLNAMNFIQPGAFKE, and RLHKLTLRNSFDSLNVMKTCI. An N-linked (GlcNAc...) asparagine glycan is attached at asparagine 203. Cysteine 279 and cysteine 304 form a disulfide bridge. Residues asparagine 280 and asparagine 307 are each glycosylated (N-linked (GlcNAc...) asparagine). 8 LRR repeats span residues 372-392, 398-420, 421-442, 446-454, 470-493, 495-516, 519-540, and 543-563; these read SLEFLDLSRNGLSFKGCCSQS, SLKYLDLSFNDVITMGSNFLGLE, QLEHLDFQHSNLKQMSEFSVFL, NLIYLDISH, SLKVLKMAGNSFQENFLPDIFTEL, NLTFLDLSQCQLEQLSPTAFNS, SLQVLNMSHNNFFSLDTFPYKC, and SLQVLDYSLNHIMTSKKQELQ. A disulfide bond links cysteine 388 and cysteine 389. Residues asparagine 495 and asparagine 524 are each glycosylated (N-linked (GlcNAc...) asparagine). Residue asparagine 573 is glycosylated (N-linked (GlcNAc...) asparagine). Positions 577-627 constitute an LRRCT domain; sequence NDFACTCEHQSFLQWIKDQRQLLVEVERMECATPSDKQGMPVLSLNITCQM. Cystine bridges form between cysteine 581/cysteine 607 and cysteine 583/cysteine 625. Residues asparagine 622 and asparagine 628 are each glycosylated (N-linked (GlcNAc...) asparagine). A helical membrane pass occupies residues 630-650; sequence TVIGVSVFSVLVVSVVAVLVY. At 651–828 the chain is on the cytoplasmic side; that stretch reads KFYFHLMLLA…WNPEGTVGTG (178 aa). Residues 670-813 enclose the TIR domain; sequence NTYDAFVIYS…IFWRRLRKAL (144 aa).

Belongs to the Toll-like receptor family. As to quaternary structure, belongs to the lipopolysaccharide (LPS) receptor, a multi-protein complex containing at least CD14, LY96 and TLR4. Binding to bacterial LPS leads to homodimerization. Interacts with LY96 via the extracellular domain. Interacts with MYD88 and TIRAP via their respective TIR domains. Interacts with TICAM2. Interacts with NOX4. Interacts with CNPY3 and HSP90B1; this interaction is required for proper folding in the endoplasmic reticulum. Interacts with MAP3K21; this interaction leads to negative regulation of TLR4 signaling. Interacts with CD36, following CD36 stimulation by oxLDL or amyloid-beta 42, and forms a heterodimer with TLR6. The trimeric complex is internalized and triggers inflammatory response. LYN kinase activity facilitates TLR4-TLR6 heterodimerization and signal initiation. Interacts with TICAM1 in response to LPS in a WDFY1-dependent manner. Interacts with WDFY1 in response to LPS. Interacts with SMPDL3B. Interacts with CEACAM1; upon lipopolysaccharide stimulation, forms a complex including TLR4 and the phosphorylated form of SYK and CEACAM1, which in turn, recruits PTPN6 that dephosphorylates SYK, reducing the production of reactive oxygen species (ROS) and lysosome disruption, which in turn, reduces the activity of the inflammasome. Interacts with RFTN1; the interaction occurs in response to lipopolysaccharide stimulation. Interacts with SCIMP; the interaction occurs in response to lipopolysaccharide stimulation and is enhanced by phosphorylation of SCIMP by LYN. This interaction facilitates the phosphorylation of TLR4 by LYN which elicits a selective cytokine response in macrophages. Interacts with TRAF3IP3. Interacts with TREM1; this interaction enhances TLR4-mediated inflammatory response. Interacts with ZG16B/PAUF. Interacts with CD82; this interaction inhibits TLR4-mediated signaling pathway. Phosphorylated on tyrosine residues by LYN after binding lipopolysaccharide. In terms of processing, ubiquitinated by RNF128 via 'Lys-28'-linked polyubiquitin chains, leading to proteasomal degradation.

It is found in the cell membrane. It localises to the early endosome. Its subcellular location is the cell projection. The protein localises to the ruffle. Transmembrane receptor that functions as a pattern recognition receptor recognizing pathogen- and damage-associated molecular patterns (PAMPs and DAMPs) to induce innate immune responses via downstream signaling pathways. At the plasma membrane, cooperates with LY96 to mediate the innate immune response to bacterial lipopolysaccharide (LPS). Also involved in LPS-independent inflammatory responses triggered by free fatty acids, such as palmitate, and Ni(2+). Mechanistically, acts via MYD88, TIRAP and TRAF6, leading to NF-kappa-B activation, cytokine secretion and the inflammatory response. Alternatively, CD14-mediated TLR4 internalization via endocytosis is associated with the initiation of a MYD88-independent signaling via the TICAM1-TBK1-IRF3 axis leading to type I interferon production. In addition to the secretion of proinflammatory cytokines, initiates the activation of NLRP3 inflammasome and formation of a positive feedback loop between autophagy and NF-kappa-B signaling cascade. In complex with TLR6, promotes inflammation in monocytes/macrophages by associating with TLR6 and the receptor CD86. Upon ligand binding, such as oxLDL or amyloid-beta 42, the TLR4:TLR6 complex is internalized and triggers inflammatory response, leading to NF-kappa-B-dependent production of CXCL1, CXCL2 and CCL9 cytokines, via MYD88 signaling pathway, and CCL5 cytokine, via TICAM1 signaling pathway. In myeloid dendritic cells, vesicular stomatitis virus glycoprotein G but not LPS promotes the activation of IRF7, leading to type I IFN production in a CD14-dependent manner. The protein is Toll-like receptor 4 (TLR4) of Pongo pygmaeus (Bornean orangutan).